Consider the following 131-residue polypeptide: DNA-directed RNA polymerases I, II, and III subunit RPABC2 (131 aa).

The segment at Met-1–Asp-24 is disordered.

The protein belongs to the archaeal Rpo6/eukaryotic RPB6 RNA polymerase subunit family. Component of the RNA polymerase I (Pol I), RNA polymerase II (Pol II) and RNA polymerase III (Pol III) complexes consisting of at least 13, 12 and 17 subunits, respectively.

It is found in the nucleus. Functionally, DNA-dependent RNA polymerases catalyze the transcription of DNA into RNA using the four ribonucleoside triphosphates as substrates. Common component of RNA polymerases I, II and III which synthesize ribosomal RNA precursors, mRNA precursors and many functional non-coding RNAs, and small RNAs, such as 5S rRNA and tRNAs, respectively. Pol II is the central component of the basal RNA polymerase II transcription machinery. Pols are composed of mobile elements that move relative to each other. In Pol II, Polr2F/RPB6 is part of the clamp element and together with parts of Polr2A/RPB1 and RPB2 forms a pocket to which the Polr2D/RPB4-Polr2G/RPB7 subcomplex binds. This chain is DNA-directed RNA polymerases I, II, and III subunit RPABC2, found in Drosophila melanogaster (Fruit fly).